The following is a 459-amino-acid chain: UDP-N-acetylglucosamine 1-carboxyvinyltransferase (459 aa).

40–41 (KN) lines the phosphoenolpyruvate pocket. R111 lines the UDP-N-acetyl-alpha-D-glucosamine pocket. The active-site Proton donor is C135. A 2-(S-cysteinyl)pyruvic acid O-phosphothioketal modification is found at C135. UDP-N-acetyl-alpha-D-glucosamine is bound by residues 140 to 144 (RPVDL), D324, and V346. Residues 437-459 (PSAPPSEVSSAVAAGPDAAAAPV) form a disordered region. Positions 441–459 (PSEVSSAVAAGPDAAAAPV) are enriched in low complexity.

The protein belongs to the EPSP synthase family. MurA subfamily.

The protein localises to the cytoplasm. It carries out the reaction phosphoenolpyruvate + UDP-N-acetyl-alpha-D-glucosamine = UDP-N-acetyl-3-O-(1-carboxyvinyl)-alpha-D-glucosamine + phosphate. It participates in cell wall biogenesis; peptidoglycan biosynthesis. Functionally, cell wall formation. Adds enolpyruvyl to UDP-N-acetylglucosamine. The sequence is that of UDP-N-acetylglucosamine 1-carboxyvinyltransferase from Gloeobacter violaceus (strain ATCC 29082 / PCC 7421).